The chain runs to 1171 residues: ATP-dependent helicase/deoxyribonuclease subunit B (1171 aa).

The UvrD-like helicase ATP-binding domain occupies 1–343; it reads MSLRFVIGRA…LVAEENYRYR (343 aa). An ATP-binding site is contributed by 8 to 15; the sequence is GRAGSGKS. The UvrD-like helicase C-terminal domain occupies 281–587; sequence MEQPRFHSPA…QFANIPPSLD (307 aa). Residues cysteine 805, cysteine 1129, cysteine 1132, and cysteine 1138 each contribute to the [4Fe-4S] cluster site.

Belongs to the helicase family. AddB/RexB type 1 subfamily. Heterodimer of AddA and AddB. Mg(2+) is required as a cofactor. Requires [4Fe-4S] cluster as cofactor.

In terms of biological role, the heterodimer acts as both an ATP-dependent DNA helicase and an ATP-dependent, dual-direction single-stranded exonuclease. Recognizes the chi site generating a DNA molecule suitable for the initiation of homologous recombination. The AddB subunit has 5' -&gt; 3' nuclease activity but not helicase activity. In Bacillus thuringiensis subsp. konkukian (strain 97-27), this protein is ATP-dependent helicase/deoxyribonuclease subunit B.